The following is a 432-amino-acid chain: Neuronal pentraxin-2 (432 aa).

An N-terminal signal peptide occupies residues 1–14 (MLALLTAGVALAVA). Residues Asn149 and Asn190 are each glycosylated (N-linked (GlcNAc...) asparagine). In terms of domain architecture, Pentraxin (PTX) spans 224–425 (DAFKVSLPLR…GASKWPVETC (202 aa)). A disulfide bond links Cys254 and Cys314. Ca(2+) contacts are provided by Asn278, Glu356, Gln357, Asp358, and Gln368. A glycan (N-linked (GlcNAc...) asparagine) is linked at Asn394.

As to quaternary structure, homooligomer or heterooligomer (probably pentamer) with neuronal pentraxin receptor (NPTXR). Ca(2+) serves as cofactor.

The protein localises to the secreted. Its function is as follows. Likely to play role in the modification of cellular properties that underlie long-term plasticity. Binds to agar matrix in a calcium-dependent manner. This chain is Neuronal pentraxin-2 (Nptx2), found in Rattus norvegicus (Rat).